Reading from the N-terminus, the 264-residue chain is Small ribosomal subunit protein uS2 (264 aa).

The protein belongs to the universal ribosomal protein uS2 family.

This is Small ribosomal subunit protein uS2 from Synechococcus sp. (strain JA-2-3B'a(2-13)) (Cyanobacteria bacterium Yellowstone B-Prime).